We begin with the raw amino-acid sequence, 440 residues long: COP9 signalosome complex subunit 5 (440 aa).

An MPN domain is found at 71–218 (VLISKLSCEK…MGAFRTIESK (148 aa)). Zn(2+) is bound by residues His-164, His-166, and Asp-177. The short motif at 164–177 (HSHPGYDCWLSNID) is the JAMM motif element. Positions 319–341 (TQRGDSTETSSFGSMFSGDNTSD) are enriched in polar residues. Disordered stretches follow at residues 319-343 (TQRG…SDVD) and 376-400 (SRST…HDEG).

The protein belongs to the peptidase M67A family. CSN5 subfamily. Component of a COP9 signalosome-like (CSN) complex, composed of at least RRI1/CSN5, CSN9, RRI2/CSN10, PCI8/CSN11, CSN12 and CSI1. Within this complex it probably interacts directly with CSN12. Also interacts with RPN5. A divalent metal cation serves as cofactor.

The protein localises to the cytoplasm. It localises to the nucleus. Catalytic component of the COP9 signalosome (CSN) complex that acts as an regulator of the ubiquitin (Ubl) conjugation pathway by mediating the deneddylation of the cullin subunit of SCF-type E3 ubiquitin-protein ligase complexes. The CSN complex is involved in the regulation of the mating pheromone response. In Saccharomyces cerevisiae (strain YJM789) (Baker's yeast), this protein is COP9 signalosome complex subunit 5 (RRI1).